The following is a 379-amino-acid chain: MAVGLQKLVHYKRIVIKIGSALLVDPQTGLRAEWLKSLISDVANLHQKGVEILLVSSGAIALGRTLLRLPKGALKLEESQACAALGQIELAKTYSDTLAQYGLKTGQILLTLFDTEERRRYLNARATINVLLRFGAVPVINENDTVATSEIRYGDNDRLAARVATMMGADLLILLSDIDGLYTKSPHRDPTAEFIPFIASITSDIEKMADVAHSELSRGGMKTKLDAGKIANSAGTAMIITSGKRMNPLAAIDRGERGSFFAAGEKPVNAWKTWISGHLDPSGILMIDQGAVKALESGKSLLAAGVVAIEGRFNRGDTVAIVDTNGVEIARGLVSYGKDESVRIMGRKSEEIESILGYEARSAMVHRNDMVLRCLTDSA.

Residue lysine 17 coordinates ATP. Positions 57, 144, and 156 each coordinate substrate. 176 to 177 (SD) contacts ATP. The PUA domain occupies 282-359 (SGILMIDQGA…EEIESILGYE (78 aa)).

It belongs to the glutamate 5-kinase family.

It is found in the cytoplasm. It carries out the reaction L-glutamate + ATP = L-glutamyl 5-phosphate + ADP. It functions in the pathway amino-acid biosynthesis; L-proline biosynthesis; L-glutamate 5-semialdehyde from L-glutamate: step 1/2. In terms of biological role, catalyzes the transfer of a phosphate group to glutamate to form L-glutamate 5-phosphate. In Bartonella henselae (strain ATCC 49882 / DSM 28221 / CCUG 30454 / Houston 1) (Rochalimaea henselae), this protein is Glutamate 5-kinase.